The chain runs to 224 residues: MKWYLVALSGLLLSGCVVQQTEVVSPSFDQQLKSPAPNYSNGSIWQASSIGLTEDGKARRVGDIVTIIVTETASASKQAATATGRSSQISAGIPNMLGLEESKIITSNFADLSKLLNASASSKFDGSGSTSRKETLSATISAKVIDVLPNSNLKIEGRRNVRVNNEDQIVTVKGTIRQRDITAENTINSIYVADAQISYAGEGIISDRQKPGWLMNVLDKLWPF.

An N-terminal signal peptide occupies residues 1 to 15 (MKWYLVALSGLLLSG). Cys-16 carries the N-palmitoyl cysteine lipid modification. Residue Cys-16 is the site of S-diacylglycerol cysteine attachment.

The protein belongs to the FlgH family. The basal body constitutes a major portion of the flagellar organelle and consists of four rings (L,P,S, and M) mounted on a central rod.

It is found in the cell outer membrane. Its subcellular location is the bacterial flagellum basal body. In terms of biological role, assembles around the rod to form the L-ring and probably protects the motor/basal body from shearing forces during rotation. The sequence is that of Flagellar L-ring protein from Trichlorobacter lovleyi (strain ATCC BAA-1151 / DSM 17278 / SZ) (Geobacter lovleyi).